The following is a 456-amino-acid chain: Bifunctional protein GlmU (456 aa).

Positions 1 to 229 are pyrophosphorylase; the sequence is MSNSSMSVVI…LSEVEGVNNR (229 aa). Residues 11-14, lysine 25, glutamine 76, 81-82, 103-105, glycine 140, glutamate 154, asparagine 169, and asparagine 227 each bind UDP-N-acetyl-alpha-D-glucosamine; these read LAAG, GT, and YGD. Aspartate 105 contributes to the Mg(2+) binding site. Residue asparagine 227 participates in Mg(2+) binding. The linker stretch occupies residues 230–250; the sequence is LQLSALERVFQTEQAEKLLLA. The interval 251-456 is N-acetyltransferase; sequence GVMLLDPSRF…QGWKRPVKKK (206 aa). UDP-N-acetyl-alpha-D-glucosamine contacts are provided by arginine 333 and lysine 351. The active-site Proton acceptor is histidine 363. The UDP-N-acetyl-alpha-D-glucosamine site is built by tyrosine 366 and asparagine 377. Acetyl-CoA-binding positions include alanine 380, 386 to 387, serine 405, alanine 423, and arginine 440; that span reads NY.

The protein in the N-terminal section; belongs to the N-acetylglucosamine-1-phosphate uridyltransferase family. In the C-terminal section; belongs to the transferase hexapeptide repeat family. In terms of assembly, homotrimer. Mg(2+) is required as a cofactor.

The protein localises to the cytoplasm. It carries out the reaction alpha-D-glucosamine 1-phosphate + acetyl-CoA = N-acetyl-alpha-D-glucosamine 1-phosphate + CoA + H(+). The catalysed reaction is N-acetyl-alpha-D-glucosamine 1-phosphate + UTP + H(+) = UDP-N-acetyl-alpha-D-glucosamine + diphosphate. Its pathway is nucleotide-sugar biosynthesis; UDP-N-acetyl-alpha-D-glucosamine biosynthesis; N-acetyl-alpha-D-glucosamine 1-phosphate from alpha-D-glucosamine 6-phosphate (route II): step 2/2. It participates in nucleotide-sugar biosynthesis; UDP-N-acetyl-alpha-D-glucosamine biosynthesis; UDP-N-acetyl-alpha-D-glucosamine from N-acetyl-alpha-D-glucosamine 1-phosphate: step 1/1. The protein operates within bacterial outer membrane biogenesis; LPS lipid A biosynthesis. Catalyzes the last two sequential reactions in the de novo biosynthetic pathway for UDP-N-acetylglucosamine (UDP-GlcNAc). The C-terminal domain catalyzes the transfer of acetyl group from acetyl coenzyme A to glucosamine-1-phosphate (GlcN-1-P) to produce N-acetylglucosamine-1-phosphate (GlcNAc-1-P), which is converted into UDP-GlcNAc by the transfer of uridine 5-monophosphate (from uridine 5-triphosphate), a reaction catalyzed by the N-terminal domain. This Yersinia pseudotuberculosis serotype O:1b (strain IP 31758) protein is Bifunctional protein GlmU.